Consider the following 439-residue polypeptide: Vacuolar protein sorting-associated protein 4 (439 aa).

One can recognise an MIT domain in the interval 8 to 75 (LSKGIDLVQK…TRAEQLKDHL (68 aa)). Positions 76–113 (EKQAQNKSTAESSVNGSTKAKKSNGDGNGSGDDNDDAD) are disordered. Polar residues predominate over residues 80 to 93 (QNKSTAESSVNGST). 175 to 182 (GPPGTGKS) contacts ATP.

This sequence belongs to the AAA ATPase family. Monomer or homodimer (in nucleotide-free form). Decamer, dodecamer or tetradecamer of two stacked respective homooligomeric rings (when bound to ATP); the dodecameric form seems to be predominant.

The protein resides in the endosome membrane. Functionally, pre-vacuolar protein sorting protein involved in the transport of biosynthetic membrane proteins from the prevacuolar/endosomal compartment to the vacuole. Required for multivesicular body (MVB) protein sorting. Catalyzes the ATP-dependent dissociation of class E VPS proteins from endosomal membranes, such as the disassembly of the ESCRT-III complex. Required for extracellular secretion of the secreted aspartyl proteases SAP2, SAP4, SAP5, and SAP6. Its regulation of the pre-vacuolar secretory pathway is critical for virulence. The polypeptide is Vacuolar protein sorting-associated protein 4 (Candida albicans (strain SC5314 / ATCC MYA-2876) (Yeast)).